A 451-amino-acid polypeptide reads, in one-letter code: 3-phosphoshikimate 1-carboxyvinyltransferase (451 aa).

Positions 30, 31, and 35 each coordinate 3-phosphoshikimate. Lys-30 is a phosphoenolpyruvate binding site. Positions 101 and 130 each coordinate phosphoenolpyruvate. Ser-176, Ser-177, Gln-178, Asp-321, and Lys-348 together coordinate 3-phosphoshikimate. A phosphoenolpyruvate-binding site is contributed by Gln-178. Asp-321 functions as the Proton acceptor in the catalytic mechanism. Phosphoenolpyruvate contacts are provided by Arg-352 and Gln-422.

This sequence belongs to the EPSP synthase family. In terms of assembly, monomer.

It localises to the cytoplasm. The enzyme catalyses 3-phosphoshikimate + phosphoenolpyruvate = 5-O-(1-carboxyvinyl)-3-phosphoshikimate + phosphate. It functions in the pathway metabolic intermediate biosynthesis; chorismate biosynthesis; chorismate from D-erythrose 4-phosphate and phosphoenolpyruvate: step 6/7. In terms of biological role, catalyzes the transfer of the enolpyruvyl moiety of phosphoenolpyruvate (PEP) to the 5-hydroxyl of shikimate-3-phosphate (S3P) to produce enolpyruvyl shikimate-3-phosphate and inorganic phosphate. The chain is 3-phosphoshikimate 1-carboxyvinyltransferase from Burkholderia pseudomallei (strain K96243).